The following is a 240-amino-acid chain: Ribosomal RNA large subunit methyltransferase E (240 aa).

Residues 1–20 show a composition bias toward gly residues; the sequence is MSKAGGNKGGVKTGGRGGAG. The tract at residues 1–27 is disordered; the sequence is MSKAGGNKGGVKTGGRGGAGSSNLQVR. The S-adenosyl-L-methionine site is built by Gly-92, Trp-94, Asp-115, Asp-131, and Asp-155. Lys-195 functions as the Proton acceptor in the catalytic mechanism.

The protein belongs to the class I-like SAM-binding methyltransferase superfamily. RNA methyltransferase RlmE family.

It is found in the cytoplasm. It catalyses the reaction uridine(2552) in 23S rRNA + S-adenosyl-L-methionine = 2'-O-methyluridine(2552) in 23S rRNA + S-adenosyl-L-homocysteine + H(+). In terms of biological role, specifically methylates the uridine in position 2552 of 23S rRNA at the 2'-O position of the ribose in the fully assembled 50S ribosomal subunit. The sequence is that of Ribosomal RNA large subunit methyltransferase E from Brucella anthropi (strain ATCC 49188 / DSM 6882 / CCUG 24695 / JCM 21032 / LMG 3331 / NBRC 15819 / NCTC 12168 / Alc 37) (Ochrobactrum anthropi).